Reading from the N-terminus, the 254-residue chain is rRNA N-glycosylase sapovaccarin-S2 (254 aa).

It belongs to the ribosome-inactivating protein family. Type 1 RIP subfamily. Expressed in seeds; most abundant in the perisperm.

It catalyses the reaction Endohydrolysis of the N-glycosidic bond at one specific adenosine on the 28S rRNA.. In terms of biological role, exhibits N-glycosylase activity. Catalyzes the release of one adenine from a ribosome. Acts as a ribosome-inactivating protein and inhibits protein synthesis. Induces cell death in Huh-7 liver cells. May contribute to the protection against plant pests and predators or play a role in regulating the death of plant cells. This is rRNA N-glycosylase sapovaccarin-S2 from Gypsophila vaccaria (Cow soapwort).